We begin with the raw amino-acid sequence, 243 residues long: DNA repair protein RecO (243 aa).

This sequence belongs to the RecO family.

Its function is as follows. Involved in DNA repair and RecF pathway recombination. The sequence is that of DNA repair protein RecO from Geobacter sulfurreducens (strain ATCC 51573 / DSM 12127 / PCA).